We begin with the raw amino-acid sequence, 201 residues long: 3-isopropylmalate dehydratase small subunit (201 aa).

Belongs to the LeuD family. LeuD type 1 subfamily. As to quaternary structure, heterodimer of LeuC and LeuD.

It catalyses the reaction (2R,3S)-3-isopropylmalate = (2S)-2-isopropylmalate. Its pathway is amino-acid biosynthesis; L-leucine biosynthesis; L-leucine from 3-methyl-2-oxobutanoate: step 2/4. Its function is as follows. Catalyzes the isomerization between 2-isopropylmalate and 3-isopropylmalate, via the formation of 2-isopropylmaleate. This Agrobacterium fabrum (strain C58 / ATCC 33970) (Agrobacterium tumefaciens (strain C58)) protein is 3-isopropylmalate dehydratase small subunit.